We begin with the raw amino-acid sequence, 542 residues long: uncharacterized protein (542 aa).

The Extracellular portion of the chain corresponds to 1–78 (MSVQKEEYDI…EEKKLVRKMD (78 aa)). The chain crosses the membrane as a helical span at residues 79–99 (LKIFLWVFIMFAFLDLIRKNI). Topologically, residues 100-119 (ARAVSDNFIVDLKMNTNDYN) are cytoplasmic. The chain crosses the membrane as a helical span at residues 120 to 140 (LGQTVYLVIFLASELPGNLLS). Residues 141 to 147 (KRFGPER) lie on the Extracellular side of the membrane. The chain crosses the membrane as a helical span at residues 148-168 (VIPVQIVLWSVICITQAGLKN). Residues 169–176 (RGQFIATR) are Cytoplasmic-facing. Residues 177-197 (CLLGMVQGGFIPDNILYLSYY) traverse the membrane as a helical segment. Topologically, residues 198-208 (YTGAELTFRLS) are extracellular. A helical membrane pass occupies residues 209–229 (FFWCAIPLFQILGSLLASGII). Residues 230–241 (EMRGIHNLAGWQ) are Cytoplasmic-facing. The helical transmembrane segment at 242–262 (YLFIIEGFLSLSVGVASFYLM) threads the bilayer. The Extracellular segment spans residues 263–326 (RRGPTQTGES…TLTEFDLWPL (64 aa)). Residues 327–347 (FIQGITAFISLQTVGSYLSLI) form a helical membrane-spanning segment. At 348-359 (LKSLNYSTFLSN) the chain is on the cytoplasmic side. A helical membrane pass occupies residues 360 to 380 (ILAIPGQALLLINLPLAALLS). The Extracellular portion of the chain corresponds to 381-387 (RKLKEKS). Residues 388–408 (LCVGIANVWVLPFIVSLVALP) form a helical membrane-spanning segment. At 409-416 (TDTNPWIK) the chain is on the cytoplasmic side. The chain crosses the membrane as a helical span at residues 417–437 (YILLTGILGLPYTHSILAGWV). Residues 438–482 (SEISNSVRSRTVGTALYNMSAQVGAIIASNMYRNDDKPYYTRGNK) are Extracellular-facing. Residues 483 to 503 (ILLGFTCFNICMAVATKFYYI) traverse the membrane as a helical segment. At 504-542 (SRNKYKDRKWNSMTKEEQINYLDTTKDKGMKRLDYRFIH) the chain is on the cytoplasmic side.

This sequence belongs to the major facilitator superfamily. Allantoate permease family.

Its subcellular location is the membrane. This is an uncharacterized protein from Saccharomyces cerevisiae (strain ATCC 204508 / S288c) (Baker's yeast).